The following is a 475-amino-acid chain: Aspartyl/glutamyl-tRNA(Asn/Gln) amidotransferase subunit B (475 aa).

It belongs to the GatB/GatE family. GatB subfamily. In terms of assembly, heterotrimer of A, B and C subunits.

The enzyme catalyses L-glutamyl-tRNA(Gln) + L-glutamine + ATP + H2O = L-glutaminyl-tRNA(Gln) + L-glutamate + ADP + phosphate + H(+). It carries out the reaction L-aspartyl-tRNA(Asn) + L-glutamine + ATP + H2O = L-asparaginyl-tRNA(Asn) + L-glutamate + ADP + phosphate + 2 H(+). Its function is as follows. Allows the formation of correctly charged Asn-tRNA(Asn) or Gln-tRNA(Gln) through the transamidation of misacylated Asp-tRNA(Asn) or Glu-tRNA(Gln) in organisms which lack either or both of asparaginyl-tRNA or glutaminyl-tRNA synthetases. The reaction takes place in the presence of glutamine and ATP through an activated phospho-Asp-tRNA(Asn) or phospho-Glu-tRNA(Gln). This Trichlorobacter lovleyi (strain ATCC BAA-1151 / DSM 17278 / SZ) (Geobacter lovleyi) protein is Aspartyl/glutamyl-tRNA(Asn/Gln) amidotransferase subunit B.